The chain runs to 509 residues: Protein WHAT'S THIS FACTOR 1 homolog, chloroplastic (509 aa).

The transit peptide at 1–56 (MDAKLLLLPFPSPPATLHHHPPPPKSLFLGASLPLLHPPPPLRLLRPGAPRRLAVV) directs the protein to the chloroplast. Residues 65–393 (KEIPFDNVIQ…LKEKMRALVA (329 aa)) enclose the PORR domain. 2 disordered regions span residues 402–431 (VPAT…DEDE) and 444–509 (SGGK…RERW). Over residues 461–474 (ENDDSPPDFEDDDG) the composition is skewed to acidic residues.

The protein localises to the plastid. Its subcellular location is the chloroplast. In terms of biological role, RNA-binding protein involved in group II intron splicing. Binds specific group II introns and promotes their splicing. Functions in the context of a heterodimer with the ribonuclease III domain-containing protein RNC1. The chain is Protein WHAT'S THIS FACTOR 1 homolog, chloroplastic from Oryza sativa subsp. japonica (Rice).